Reading from the N-terminus, the 236-residue chain is 2,3,4,5-tetrahydropyridine-2,6-dicarboxylate N-acetyltransferase (236 aa).

It belongs to the transferase hexapeptide repeat family. DapH subfamily.

The enzyme catalyses (S)-2,3,4,5-tetrahydrodipicolinate + acetyl-CoA + H2O = L-2-acetamido-6-oxoheptanedioate + CoA. The protein operates within amino-acid biosynthesis; L-lysine biosynthesis via DAP pathway; LL-2,6-diaminopimelate from (S)-tetrahydrodipicolinate (acetylase route): step 1/3. In terms of biological role, catalyzes the transfer of an acetyl group from acetyl-CoA to tetrahydrodipicolinate. The chain is 2,3,4,5-tetrahydropyridine-2,6-dicarboxylate N-acetyltransferase from Bacillus subtilis (strain 168).